The primary structure comprises 340 residues: Gigasin-2 (340 aa).

The N-terminal stretch at 1-21 is a signal peptide; that stretch reads MNKMSPLYVLALCCLATTVFA. EGF-like domains are found at residues 22-57 and 65-97; these read KYDC…EDCG and TAAN…DMCE. 6 cysteine pairs are disulfide-bonded: cysteine 25/cysteine 39, cysteine 33/cysteine 45, cysteine 47/cysteine 56, cysteine 69/cysteine 79, cysteine 73/cysteine 85, and cysteine 87/cysteine 96.

As to expression, component of the organic matrix of calcified shell layers.

The polypeptide is Gigasin-2 (Magallana gigas (Pacific oyster)).